The chain runs to 187 residues: Large ribosomal subunit protein bL32m (187 aa).

The Zn(2+) site is built by Cys-109, Cys-112, Cys-122, and Cys-125.

The protein belongs to the bacterial ribosomal protein bL32 family. In terms of assembly, component of the mitochondrial ribosome large subunit (39S) which comprises a 16S rRNA and about 50 distinct proteins. MRPL32 precursor is processed by the m-AAA protease (composed of AFG3L2 and SPG7), which cleaves the N-terminal transit peptide. Cleavage by the m-AAA protease takes place prior to assembly into the large subunit, an essential step for mitochondrial ribosome (mitoribosome) assembly. Proper processing by the m-AAA protease is dependent on the zinc-binding region within the tightly folded C-terminal domain of MRPL32: zinc-dependent folding halts degradation initiated from the N-terminus and triggers the release of mature MRPL32.

The protein localises to the mitochondrion. Its function is as follows. Component of the mitochondrial large ribosomal subunit (mt-LSU). The mitochondrial ribosome (mitoribosome) is a large ribonucleoprotein complex responsible for the synthesis of proteins inside mitochondria. This Mus musculus (Mouse) protein is Large ribosomal subunit protein bL32m (Mrpl32).